The primary structure comprises 382 residues: MNVCSNTTKDPLTLMAMWGSMKGYNPEQGFSFEGPEKRLEVILRCTLETHVDGLRSLDDSVWSGVVGSLNAQIVSRESNEYINSYVLTESSLFVMKNRIILITCGTTTLLNSIPNILEAISAVRGELEWVSFMHKNYSFPWMQKGPHTSLADEFATLKQHFPTGKPYIFGPVDSDHYFLFCYDDIIRPCSSEDDTQLSMTMYGLDKEQTKHWFSDRFISTSAETAAIRAATHLDRVVDGTWTLHDLQFEPCGYSINAIRDEEYQTMHITPEDHCSFASYETNSRAANYSDRMKKVLGVFRPQRFTVIVFLDPESPVGKAYNEGKGIGVEPEYYPEYNLLHRTTNEFAPGYVAMKINYVRTAAVEETDTAVGGAEPGAEGGPD.

Phenylalanine 32 serves as a coordination point for substrate. Active-site residues include glutamate 33 and glutamate 36. Leucine 87 contacts substrate. The Schiff-base intermediate with substrate; via pyruvic acid role is filled by serine 90. Serine 90 bears the Pyruvic acid (Ser); by autocatalysis mark. Catalysis depends on cysteine 104, which acts as the Proton donor; for catalytic activity. Phenylalanine 248 contacts substrate. Active-site proton acceptor; for processing activity residues include serine 254 and histidine 267. Glutamate 271 contributes to the substrate binding site.

It belongs to the eukaryotic AdoMetDC family. As to quaternary structure, heterotetramer of two alpha and two beta chains. It depends on pyruvate as a cofactor. In terms of processing, is synthesized initially as an inactive proenzyme. Formation of the active enzyme involves a self-maturation process in which the active site pyruvoyl group is generated from an internal serine residue via an autocatalytic post-translational modification. Two non-identical subunits are generated from the proenzyme in this reaction, and the pyruvate is formed at the N-terminus of the alpha chain, which is derived from the carboxyl end of the proenzyme. The post-translation cleavage follows an unusual pathway, termed non-hydrolytic serinolysis, in which the side chain hydroxyl group of the serine supplies its oxygen atom to form the C-terminus of the beta chain, while the remainder of the serine residue undergoes an oxidative deamination to produce ammonia and the pyruvoyl group blocking the N-terminus of the alpha chain.

It catalyses the reaction S-adenosyl-L-methionine + H(+) = S-adenosyl 3-(methylsulfanyl)propylamine + CO2. It functions in the pathway amine and polyamine biosynthesis; S-adenosylmethioninamine biosynthesis; S-adenosylmethioninamine from S-adenosyl-L-methionine: step 1/1. The polypeptide is S-adenosylmethionine decarboxylase proenzyme (Leishmania donovani).